Here is a 1284-residue protein sequence, read N- to C-terminus: DNA-directed RNA polymerase subunit beta (1284 aa).

Belongs to the RNA polymerase beta chain family. The RNAP catalytic core consists of 2 alpha, 1 beta, 1 beta' and 1 omega subunit. When a sigma factor is associated with the core the holoenzyme is formed, which can initiate transcription.

It catalyses the reaction RNA(n) + a ribonucleoside 5'-triphosphate = RNA(n+1) + diphosphate. Its function is as follows. DNA-dependent RNA polymerase catalyzes the transcription of DNA into RNA using the four ribonucleoside triphosphates as substrates. In Mesoplasma florum (strain ATCC 33453 / NBRC 100688 / NCTC 11704 / L1) (Acholeplasma florum), this protein is DNA-directed RNA polymerase subunit beta.